The sequence spans 425 residues: Glucose-6-phosphate 1-dehydrogenase (425 aa).

NADP(+) contacts are provided by Arg44 and Lys135. Substrate contacts are provided by His165, Lys169, Glu201, and Asp220. His225 (proton acceptor) is an active-site residue. Residue Lys311 participates in substrate binding.

The protein belongs to the glucose-6-phosphate dehydrogenase family.

It carries out the reaction D-glucose 6-phosphate + NADP(+) = 6-phospho-D-glucono-1,5-lactone + NADPH + H(+). The protein operates within carbohydrate degradation; pentose phosphate pathway; D-ribulose 5-phosphate from D-glucose 6-phosphate (oxidative stage): step 1/3. Catalyzes the oxidation of glucose 6-phosphate to 6-phosphogluconolactone. This Helicobacter pylori (strain J99 / ATCC 700824) (Campylobacter pylori J99) protein is Glucose-6-phosphate 1-dehydrogenase.